The chain runs to 218 residues: Small ribosomal subunit protein uS3c (218 aa).

A KH type-2 domain is found at 47-118; it reads VQKNMRTSSG…KLNIAVTRIA (72 aa).

Belongs to the universal ribosomal protein uS3 family. As to quaternary structure, part of the 30S ribosomal subunit.

It is found in the plastid. The protein localises to the chloroplast. The protein is Small ribosomal subunit protein uS3c (rps3) of Nicotiana tomentosiformis (Tobacco).